We begin with the raw amino-acid sequence, 271 residues long: MLKIGIVGCGFIGGQICRAIDGGEVSAELYALCDSSESKALELAASLKTCKPSYMKIEELIRGVDLIIESASQNAVRFIVPQALKAGCDVMILSVGALADEELRDTLFGLAKEHNCKLYFPSGAVVGIDGLNSASAAGISSVTLSTRKPPAGLMGAPYVVEHGIELEKLEKKTVLFEGPASEAVKAFPANVNVAATISLAGIGFERTRVKVIADPSLFRNVHEIIVEGEFGKFSTRVENLPSPENPKTSYLAALSAVSTLKKILNPVQIGT.

NAD(+)-binding residues include Ala-124 and Asn-192. Residue His-222 is part of the active site.

The protein belongs to the L-aspartate dehydrogenase family.

The catalysed reaction is L-aspartate + NADP(+) + H2O = oxaloacetate + NH4(+) + NADPH + H(+). The enzyme catalyses L-aspartate + NAD(+) + H2O = oxaloacetate + NH4(+) + NADH + H(+). Its pathway is cofactor biosynthesis; NAD(+) biosynthesis; iminoaspartate from L-aspartate (dehydrogenase route): step 1/1. In terms of biological role, specifically catalyzes the NAD or NADP-dependent dehydrogenation of L-aspartate to iminoaspartate. This is L-aspartate dehydrogenase from Methanosarcina acetivorans (strain ATCC 35395 / DSM 2834 / JCM 12185 / C2A).